A 118-amino-acid polypeptide reads, in one-letter code: Large ribosomal subunit protein bL19 (118 aa).

The protein belongs to the bacterial ribosomal protein bL19 family.

In terms of biological role, this protein is located at the 30S-50S ribosomal subunit interface and may play a role in the structure and function of the aminoacyl-tRNA binding site. The polypeptide is Large ribosomal subunit protein bL19 (Dictyoglomus turgidum (strain DSM 6724 / Z-1310)).